A 419-amino-acid chain; its full sequence is E3 ubiquitin-protein ligase pellino homolog 2 (419 aa).

In terms of domain architecture, FHA; atypical spans 15-202; sequence EPVKYRELVV…HPQGGFTEES (188 aa).

This sequence belongs to the pellino family. In terms of assembly, interacts with TRAF6, IRAK4 and MAP3K7. Interacts with IRAK1. Interacts with BCL10; this interaction is impaired by SOCS3. Phosphorylated by IRAK1 and IRAK4 enhancing its E3 ligase activity. As to expression, widely expressed both in embryos and adult. Weakly or not expressed in spleen and thymus.

The catalysed reaction is S-ubiquitinyl-[E2 ubiquitin-conjugating enzyme]-L-cysteine + [acceptor protein]-L-lysine = [E2 ubiquitin-conjugating enzyme]-L-cysteine + N(6)-ubiquitinyl-[acceptor protein]-L-lysine.. It functions in the pathway protein modification; protein ubiquitination. Its function is as follows. E3 ubiquitin ligase catalyzing the covalent attachment of ubiquitin moieties onto substrate proteins. Involved in the TLR and IL-1 signaling pathways via interaction with the complex containing IRAK kinases and TRAF6. Mediates IL1B-induced IRAK1 'Lys-63'-linked polyubiquitination and possibly 'Lys-48'-linked ubiquitination. May be important for LPS- and IL1B-induced MAP3K7-dependent, but not MAP3K3-dependent, NF-kappa-B activation. Can activate the MAP (mitogen activated protein) kinase pathway leading to activation of ELK1. The chain is E3 ubiquitin-protein ligase pellino homolog 2 (Peli2) from Mus musculus (Mouse).